Consider the following 147-residue polypeptide: Ribonuclease P protein component 2 (147 aa).

This sequence belongs to the eukaryotic/archaeal RNase P protein component 2 family. In terms of assembly, consists of a catalytic RNA component and at least 4-5 protein subunits.

It localises to the cytoplasm. It catalyses the reaction Endonucleolytic cleavage of RNA, removing 5'-extranucleotides from tRNA precursor.. In terms of biological role, part of ribonuclease P, a protein complex that generates mature tRNA molecules by cleaving their 5'-ends. In Methanocorpusculum labreanum (strain ATCC 43576 / DSM 4855 / Z), this protein is Ribonuclease P protein component 2.